We begin with the raw amino-acid sequence, 294 residues long: BOI-related E3 ubiquitin-protein ligase 1 (294 aa).

A WRD domain region spans residues 168–204; the sequence is LQERVKNLYVENQIWRDLAQTNEATANNLRSNLEQVL. Residues 183–212 adopt a coiled-coil conformation; it reads RDLAQTNEATANNLRSNLEQVLAQVDDLDA. An RING-type zinc finger spans residues 244-281; it reads CKRCGELTASVLVLPCRHLCLCTVCGSSALLRTCPVCD.

In terms of assembly, interacts with the DELLA proteins GAI, RGA, RGL1, RGL2 and RGL3.

It carries out the reaction S-ubiquitinyl-[E2 ubiquitin-conjugating enzyme]-L-cysteine + [acceptor protein]-L-lysine = [E2 ubiquitin-conjugating enzyme]-L-cysteine + N(6)-ubiquitinyl-[acceptor protein]-L-lysine.. Its pathway is protein degradation; proteasomal ubiquitin-dependent pathway. In terms of biological role, E3 ubiquitin-protein ligase involved in regulation of abiotic stress responses. Not involved in ubiquitination of MYB108/BOS1. Has no effect on the stability of the DELLA proteins. The sequence is that of BOI-related E3 ubiquitin-protein ligase 1 (BRG1) from Arabidopsis thaliana (Mouse-ear cress).